The sequence spans 359 residues: uncharacterized protein (359 aa).

46 to 53 contributes to the ATP binding site; sequence GPKSSGKS.

Belongs to the archaeal ATPase family.

This is an uncharacterized protein from Methanocaldococcus jannaschii (strain ATCC 43067 / DSM 2661 / JAL-1 / JCM 10045 / NBRC 100440) (Methanococcus jannaschii).